Reading from the N-terminus, the 347-residue chain is Nod factor export ATP-binding protein I (347 aa).

Residues 1–11 are compositionally biased toward basic and acidic residues; the sequence is MGENMEREMLR. Positions 1–32 are disordered; it reads MGENMEREMLRPKTIAMDQNSASARSNPEREI. Residues 17–26 show a composition bias toward polar residues; that stretch reads MDQNSASARS. The ABC transporter domain occupies 49 to 279; that stretch reads IDLQAVTMIY…IIGCPVIEVY (231 aa). Position 81–88 (81–88) interacts with ATP; sequence GPNGAGKS.

It belongs to the ABC transporter superfamily. Lipooligosaccharide exporter (TC 3.A.1.102) family. As to quaternary structure, the complex is composed of two ATP-binding proteins (NodI) and two transmembrane proteins (NodJ).

Its subcellular location is the cell inner membrane. Part of the ABC transporter complex NodIJ involved in the export of the nodulation factors (Nod factors), the bacterial signal molecules that induce symbiosis and subsequent nodulation induction. Nod factors are LCO (lipo-chitin oligosaccharide), a modified beta-1,4-linked N-acetylglucosamine oligosaccharide. This subunit is responsible for energy coupling to the transport system. The sequence is that of Nod factor export ATP-binding protein I from Neorhizobium galegae (Rhizobium galegae).